The primary structure comprises 593 residues: Chaperone protein DnaK (593 aa).

Residue threonine 181 is modified to Phosphothreonine; by autocatalysis.

It belongs to the heat shock protein 70 family.

In terms of biological role, acts as a chaperone. In Mycoplasmoides gallisepticum (strain R(low / passage 15 / clone 2)) (Mycoplasma gallisepticum), this protein is Chaperone protein DnaK.